A 494-amino-acid chain; its full sequence is Paired box protein Pax-2-B (494 aa).

A DNA-binding region (paired) is located at residues 15–141 (RHGGVNQLGG…SSINRIIRTK (127 aa)). The PAI subdomain stretch occupies residues 18-74 (GVNQLGGVFVNGRPLPDVVRQRIVELAHQGVRPCDISRQLRVSHGCVSKILGRYYET). Residues 93–141 (KVVDKIADYKRQNPTMFAWEIRDRLLAEGICDNDTVPSVSSINRIIRTK) are RED subdomain. Positions 142–221 (VQQPFHPTPD…GDSQSSVESL (80 aa)) are disordered. Over residues 163 to 175 (VPSTASPPVSSAS) the composition is skewed to low complexity.

Expression becomes spatially localized at mid-gastrula stages and is localized to the nervous system (midbrain, hindbrain, spinal cord), sensory organs (optic vesicle and stalk, otic vesicle), visceral arches, developing excretory system (pronephros, pronephric duct, rectal diverticulum, proctodaeum) and thryoid gland. Splicing does not appear to be tissue-specific.

The protein resides in the nucleus. Functionally, probable transcription factor. Involved in kidney development, acting synergistically with lhx1/lim-1 in pronephric morphogenesis during the tailbud stages. This is Paired box protein Pax-2-B (pax2-b) from Xenopus laevis (African clawed frog).